A 490-amino-acid chain; its full sequence is Sushi domain-containing protein 4 (490 aa).

The tract at residues 1-21 (MYHGMNPSNGDGFLEQQQQQQ) is disordered. A signal peptide spans 1 to 41 (MYHGMNPSNGDGFLEQQQQQQQPQSPQRLLAVILWFQLALC). The Extracellular portion of the chain corresponds to 42 to 319 (FGPAQLTGGF…PSTHETLLTT (278 aa)). Sushi domains are found at residues 55–119 (QVCA…ICVQ), 120–179 (EDCR…ICQG), 178–239 (QGCL…RCLA), and 241–304 (EVCP…YCIK). 8 disulfides stabilise this stretch: C57/C99, C85/C117, C122/C165, C147/C177, C180/C224, C210/C237, C243/C289, and C274/C302. 2 N-linked (GlcNAc...) asparagine glycosylation sites follow: N104 and N134. N192 is a glycosylation site (N-linked (GlcNAc...) asparagine). Residues 320-340 (WKIVAFTATSVLLVLLLVILA) traverse the membrane as a helical segment. Topologically, residues 341 to 490 (RMFQTKFKAH…DEIPLMEEDP (150 aa)) are cytoplasmic. Residues 401-490 (GCPLPVDDQS…DEIPLMEEDP (90 aa)) are disordered. Residues 430–456 (CDSVSGSSELLQSLYSPPRCQESTHPA) show a composition bias toward polar residues. A compositionally biased stretch (acidic residues) spans 479–490 (IADEIPLMEEDP).

As to expression, isoform 3 is the predominant isoform in all tissues except cortex, cerebellum, kidney, and breast. Isoform 1 is found primarily in the esophagus and the brain.

It is found in the membrane. The protein localises to the secreted. Acts as a complement inhibitor by disrupting the formation of the classical C3 convertase. Isoform 3 inhibits the classical complement pathway, while membrane-bound isoform 1 inhibits deposition of C3b via both the classical and alternative complement pathways. The chain is Sushi domain-containing protein 4 (SUSD4) from Homo sapiens (Human).